A 194-amino-acid chain; its full sequence is Large ribosomal subunit protein bL9 (194 aa).

A compositionally biased stretch (basic and acidic residues) spans 156 to 167 (RGEDISSRREDQ). The interval 156 to 194 (RGEDISSRREDQDAAAEAIAAAGEFFDPDAQQDEEPEQQ) is disordered. The span at 181 to 194 (FDPDAQQDEEPEQQ) shows a compositional bias: acidic residues.

Belongs to the bacterial ribosomal protein bL9 family.

Binds to the 23S rRNA. In Rhodopseudomonas palustris (strain BisB5), this protein is Large ribosomal subunit protein bL9.